Here is a 453-residue protein sequence, read N- to C-terminus: Bifunctional protein GlmU (453 aa).

Residues 1–225 (MNIVILAAGT…EWETLGVNSK (225 aa)) are pyrophosphorylase. UDP-N-acetyl-alpha-D-glucosamine contacts are provided by residues 6–9 (LAAG), Lys20, Gln71, 76–77 (GT), 98–100 (YGD), Gly135, Glu150, Asn165, and Asn223. Mg(2+) is bound at residue Asp100. Mg(2+) is bound at residue Asn223. Residues 226-246 (QQLAELERIHQRNVADALLVA) form a linker region. The tract at residues 247 to 453 (GVTLADPARL…GYVRPTKKKS (207 aa)) is N-acetyltransferase. UDP-N-acetyl-alpha-D-glucosamine contacts are provided by Arg329 and Lys347. His359 (proton acceptor) is an active-site residue. The UDP-N-acetyl-alpha-D-glucosamine site is built by Tyr362 and Asn373. Residues Ala376, 382-383 (NY), Ser401, and Ala419 contribute to the acetyl-CoA site.

In the N-terminal section; belongs to the N-acetylglucosamine-1-phosphate uridyltransferase family. It in the C-terminal section; belongs to the transferase hexapeptide repeat family. Homotrimer. Requires Mg(2+) as cofactor.

Its subcellular location is the cytoplasm. It catalyses the reaction alpha-D-glucosamine 1-phosphate + acetyl-CoA = N-acetyl-alpha-D-glucosamine 1-phosphate + CoA + H(+). It carries out the reaction N-acetyl-alpha-D-glucosamine 1-phosphate + UTP + H(+) = UDP-N-acetyl-alpha-D-glucosamine + diphosphate. It functions in the pathway nucleotide-sugar biosynthesis; UDP-N-acetyl-alpha-D-glucosamine biosynthesis; N-acetyl-alpha-D-glucosamine 1-phosphate from alpha-D-glucosamine 6-phosphate (route II): step 2/2. The protein operates within nucleotide-sugar biosynthesis; UDP-N-acetyl-alpha-D-glucosamine biosynthesis; UDP-N-acetyl-alpha-D-glucosamine from N-acetyl-alpha-D-glucosamine 1-phosphate: step 1/1. It participates in bacterial outer membrane biogenesis; LPS lipid A biosynthesis. In terms of biological role, catalyzes the last two sequential reactions in the de novo biosynthetic pathway for UDP-N-acetylglucosamine (UDP-GlcNAc). The C-terminal domain catalyzes the transfer of acetyl group from acetyl coenzyme A to glucosamine-1-phosphate (GlcN-1-P) to produce N-acetylglucosamine-1-phosphate (GlcNAc-1-P), which is converted into UDP-GlcNAc by the transfer of uridine 5-monophosphate (from uridine 5-triphosphate), a reaction catalyzed by the N-terminal domain. The protein is Bifunctional protein GlmU of Paraburkholderia xenovorans (strain LB400).